Reading from the N-terminus, the 251-residue chain is GTP cyclohydrolase 1 type 2 homolog (251 aa).

5 residues coordinate a divalent metal cation: H63, H64, D101, H219, and E223.

This sequence belongs to the GTP cyclohydrolase I type 2/NIF3 family. Homohexamer.

This Pasteurella multocida (strain Pm70) protein is GTP cyclohydrolase 1 type 2 homolog.